Consider the following 705-residue polypeptide: Bifunctional arginine dihydrolase/ornithine cyclodeaminase ArgZ (705 aa).

An arginine dihydrolase region spans residues 10 to 269; that stretch reads CPPDHYDVDY…GAAKCLTLRV (260 aa). 8 residues coordinate L-arginine: asparagine 22, asparagine 71, arginine 90, arginine 139, histidine 168, aspartate 170, alanine 258, and cysteine 264. Positions 22, 71, 90, 139, and 168 each coordinate L-ornithine. The Proton donor/acceptor role is filled by histidine 168. Positions 258 and 264 each coordinate L-ornithine. Cysteine 264 serves as the catalytic Nucleophile. Positions 285–695 are ornithine cyclodeaminase; that stretch reads SRVIRMEGHL…SLLVRQLQQL (411 aa). NAD(+) is bound by residues asparagine 525, alanine 526, aspartate 604, serine 636, methionine 637, leucine 638, histidine 639, aspartate 657, aspartate 680, and valine 681.

This sequence in the N-terminal section; belongs to the DDAH family. It in the C-terminal section; belongs to the AgrE/ArgZ ornithine cyclodeaminase family. In terms of assembly, homotetramer. NAD(+) is required as a cofactor.

It carries out the reaction L-arginine + 2 H2O + 2 H(+) = L-ornithine + 2 NH4(+) + CO2. The catalysed reaction is L-ornithine = L-proline + NH4(+). With respect to regulation, arginine dihydrolase activity does not require a metal cofactor. Functionally, bifunctional enzyme involved in a cyanobacterial arginine utilization pathway that enables cellular adaptation to nitrogen fluctuations. Catalyzes the hydrolysis of arginine to ornithine, with the release of ammonia and carbon dioxide. Then, probably catalyzes the conversion of ornithine to proline, with the release of ammonia. Is highly specific for arginine and cannot hydrolyze citrulline, dimethylarginine and other amino acids. This Synechocystis sp. (strain ATCC 27184 / PCC 6803 / Kazusa) protein is Bifunctional arginine dihydrolase/ornithine cyclodeaminase ArgZ.